Consider the following 607-residue polypeptide: ATP-dependent zinc metalloprotease FtsH 2 (607 aa).

Residues 1-2 lie on the Cytoplasmic side of the membrane; it reads MR. Residues 3-23 traverse the membrane as a helical segment; that stretch reads SLWIVLVLVLGSALLLQVMAA. Residues 24-99 are Periplasmic-facing; it reads SDDRIPYARF…PYTRVADELG (76 aa). A helical transmembrane segment spans residues 100–120; that stretch reads LPPYLWLLLPLAGLAAMGHLA. The Cytoplasmic segment spans residues 121 to 607; it reads SRRATTAGTI…LREMVASGEA (487 aa). 195–202 is a binding site for ATP; sequence GPPGTGKT. Position 418 (His-418) interacts with Zn(2+). Glu-419 is a catalytic residue. Zn(2+)-binding residues include His-422 and Asp-495.

In the central section; belongs to the AAA ATPase family. This sequence in the C-terminal section; belongs to the peptidase M41 family. Homohexamer. Requires Zn(2+) as cofactor.

Its subcellular location is the cell inner membrane. Functionally, acts as a processive, ATP-dependent zinc metallopeptidase for both cytoplasmic and membrane proteins. Plays a role in the quality control of integral membrane proteins. This is ATP-dependent zinc metalloprotease FtsH 2 from Sorangium cellulosum (strain So ce56) (Polyangium cellulosum (strain So ce56)).